Consider the following 111-residue polypeptide: Cell cycle protein GpsB (111 aa).

The stretch at 38 to 72 (IKDYEAFHKEFDQLKQQNARLKRELEEQKVAATQV) forms a coiled coil.

It belongs to the GpsB family. Forms polymers through the coiled coil domains. Interacts with PBP1, MreC and EzrA.

The protein resides in the cytoplasm. Its function is as follows. Divisome component that associates with the complex late in its assembly, after the Z-ring is formed, and is dependent on DivIC and PBP2B for its recruitment to the divisome. Together with EzrA, is a key component of the system that regulates PBP1 localization during cell cycle progression. Its main role could be the removal of PBP1 from the cell pole after pole maturation is completed. Also contributes to the recruitment of PBP1 to the division complex. Not essential for septum formation. This chain is Cell cycle protein GpsB, found in Bacillus mycoides (strain KBAB4) (Bacillus weihenstephanensis).